The following is a 91-amino-acid chain: Acylphosphatase (91 aa).

The region spanning 5–91 (CSKFIVSGHV…EHDYQGFEIL (87 aa)) is the Acylphosphatase-like domain. Asparagine 38 is an active-site residue.

Belongs to the acylphosphatase family.

The catalysed reaction is an acyl phosphate + H2O = a carboxylate + phosphate + H(+). In Vibrio cholerae serotype O1 (strain ATCC 39541 / Classical Ogawa 395 / O395), this protein is Acylphosphatase (acyP).